The following is a 239-amino-acid chain: Lactate utilization protein A 2 (239 aa).

This sequence belongs to the LutA/YkgE family.

Its function is as follows. Is involved in L-lactate degradation and allows cells to grow with lactate as the sole carbon source. The chain is Lactate utilization protein A 2 from Bacillus mycoides (strain KBAB4) (Bacillus weihenstephanensis).